The following is a 317-amino-acid chain: MIKLGIVMDPISSINIKKDSSFAMMLEAQRRGWEIHYMEMNDLHLDQGIAIADTKVVQLKEDPNGWYEFTSEQTIELAELDAVLMRKDPPFDTEYIYATYILERAEEQGTLIVNKPQSLRDCNEKLFTAWFPELTPTTIVTRKAEKIKAFRQEHGDIILKPLDGMGGASIFRVKENDPNVSVIIETLTNHGQNYAMAQTFVPDISNGDKRILVVDGEPMPYCLARIPAKGETRGNLAAGGSGEPRPLSETDLKIANAVAPTLKEKGLIFVGLDVIGDKLTEINVTSPTCIREIEAAFDISITGKLMDAIERRLQAQA.

The ATP-grasp domain occupies 124–310 (EKLFTAWFPE…ITGKLMDAIE (187 aa)). 150–207 (FRQEHGDIILKPLDGMGGASIFRVKENDPNVSVIIETLTNHGQNYAMAQTFVPDISNG) serves as a coordination point for ATP. Mg(2+)-binding residues include Glu281 and Asn283.

Belongs to the prokaryotic GSH synthase family. Requires Mg(2+) as cofactor. It depends on Mn(2+) as a cofactor.

The enzyme catalyses gamma-L-glutamyl-L-cysteine + glycine + ATP = glutathione + ADP + phosphate + H(+). It functions in the pathway sulfur metabolism; glutathione biosynthesis; glutathione from L-cysteine and L-glutamate: step 2/2. This is Glutathione synthetase from Vibrio vulnificus (strain CMCP6).